The sequence spans 917 residues: Isoleucine--tRNA ligase (917 aa).

7 residues coordinate L-isoleucyl-5'-AMP: proline 56, histidine 67, glutamate 554, glycine 555, aspartate 557, glutamine 558, and histidine 585. The short motif at 57–67 is the 'HIGH' region element; it reads PYANGNLHMGH. A 'KMSKS' region motif is present at residues 595-599; it reads KMSKS. Lysine 598 contributes to the ATP binding site. The tRNA(Ile) site is built by arginine 632 and glutamine 640. Residues cysteine 886, cysteine 889, cysteine 906, and cysteine 909 each coordinate Zn(2+).

Belongs to the class-I aminoacyl-tRNA synthetase family. IleS type 1 subfamily. In terms of assembly, monomer. It depends on Zn(2+) as a cofactor.

The protein localises to the cytoplasm. The catalysed reaction is tRNA(Ile) + L-isoleucine + ATP = L-isoleucyl-tRNA(Ile) + AMP + diphosphate. Its function is as follows. Catalyzes the attachment of isoleucine to tRNA(Ile). As IleRS can inadvertently accommodate and process structurally similar amino acids such as valine, to avoid such errors it has two additional distinct tRNA(Ile)-dependent editing activities. One activity is designated as 'pretransfer' editing and involves the hydrolysis of activated Val-AMP. The other activity is designated 'posttransfer' editing and involves deacylation of mischarged Val-tRNA(Ile). The protein is Isoleucine--tRNA ligase (ileS) of Staphylococcus aureus.